We begin with the raw amino-acid sequence, 213 residues long: Ferric nitrobindin-like protein (213 aa).

Residues 17–42 (VNLAAEQSKSTSDKNLPEFGDMPIPD) form a disordered region. Positions 65 to 71 (GVWRGQG) match the GXWXGXG motif.

It belongs to the nitrobindin family.

The chain is Ferric nitrobindin-like protein from Corynebacterium jeikeium (strain K411).